A 279-amino-acid polypeptide reads, in one-letter code: Thymidylate synthase (279 aa).

Arg133–Arg134 contributes to the dUMP binding site. The Nucleophile role is filled by Cys154. DUMP is bound by residues Arg178 to Asp181, Asn189, and His219 to Tyr221. Position 181 (Asp181) interacts with (6R)-5,10-methylene-5,6,7,8-tetrahydrofolate. Ala278 is a binding site for (6R)-5,10-methylene-5,6,7,8-tetrahydrofolate.

The protein belongs to the thymidylate synthase family. Bacterial-type ThyA subfamily. In terms of assembly, homodimer.

It is found in the cytoplasm. It carries out the reaction dUMP + (6R)-5,10-methylene-5,6,7,8-tetrahydrofolate = 7,8-dihydrofolate + dTMP. It participates in pyrimidine metabolism; dTTP biosynthesis. Its function is as follows. Catalyzes the reductive methylation of 2'-deoxyuridine-5'-monophosphate (dUMP) to 2'-deoxythymidine-5'-monophosphate (dTMP) while utilizing 5,10-methylenetetrahydrofolate (mTHF) as the methyl donor and reductant in the reaction, yielding dihydrofolate (DHF) as a by-product. This enzymatic reaction provides an intracellular de novo source of dTMP, an essential precursor for DNA biosynthesis. The protein is Thymidylate synthase of Streptococcus mutans serotype c (strain ATCC 700610 / UA159).